The sequence spans 237 residues: MEASRRWPYAAWFMAVLGLVAVFSSSEAYVFYAGGRDGWVVDPAESFNYWAERNRFQVNDTIVFLHDDEVGGSVLQVTEGDFDTCSTGNPVQRLEDVAAGRSVFRFDRSGPFFFISGDEDRCQKGQKLYIIVMAVRPTKPSEAPEPAGAAGPVSSKSWSWQAFPPAGATTPPPLPPSWGSAPEHAQAPGKSSLGGSGGGEMSRSSSLGAPPPTSGAAGLAGVVASVVVGVLGALLMF.

Positions 1-28 are cleaved as a signal peptide; the sequence is MEASRRWPYAAWFMAVLGLVAVFSSSEA. Positions 29 to 134 constitute a Phytocyanin domain; that stretch reads YVFYAGGRDG…GQKLYIIVMA (106 aa). A glycan (N-linked (GlcNAc...) asparagine) is linked at Asn-59. Cys-85 and Cys-122 are joined by a disulfide. A disordered region spans residues 139–215; sequence KPSEAPEPAG…SLGAPPPTSG (77 aa). Composition is skewed to low complexity over residues 140 to 152 and 201 to 215; these read PSEA…AAGP and MSRS…PTSG. Residue Ser-206 is the site of GPI-anchor amidated serine attachment. A propeptide spans 207 to 237 (removed in mature form); that stretch reads LGAPPPTSGAAGLAGVVASVVVGVLGALLMF.

Belongs to the early nodulin-like (ENODL) family. In terms of tissue distribution, expressed ubiquitously. Accumulates particularly in reproductive tissues, especially in maturing seeds.

The protein resides in the vacuole. It is found in the aleurone grain membrane. Its function is as follows. May act as a carbohydrate transporter. This is Early nodulin-like protein 1 from Oryza sativa subsp. japonica (Rice).